Here is a 699-residue protein sequence, read N- to C-terminus: Elongation factor G (699 aa).

In terms of domain architecture, tr-type G spans 8–288; that stretch reads EDYRNFGIMA…AVCEYLPSPL (281 aa). Residues 17-24, 86-90, and 140-143 each bind GTP; these read AHIDAGKT, DTPGH, and NKMD.

The protein belongs to the TRAFAC class translation factor GTPase superfamily. Classic translation factor GTPase family. EF-G/EF-2 subfamily.

Its subcellular location is the cytoplasm. Functionally, catalyzes the GTP-dependent ribosomal translocation step during translation elongation. During this step, the ribosome changes from the pre-translocational (PRE) to the post-translocational (POST) state as the newly formed A-site-bound peptidyl-tRNA and P-site-bound deacylated tRNA move to the P and E sites, respectively. Catalyzes the coordinated movement of the two tRNA molecules, the mRNA and conformational changes in the ribosome. The polypeptide is Elongation factor G (Allorhizobium ampelinum (strain ATCC BAA-846 / DSM 112012 / S4) (Agrobacterium vitis (strain S4))).